Consider the following 157-residue polypeptide: Probable succinate transporter subunit YjjB (157 aa).

The next 4 helical transmembrane spans lie at 2–22, 55–75, 87–107, and 129–149; these read GIISFIFALAEDMLLAAIPAV, AGFNIEWATFLAALLVGSIGI, IFTVAAVIPMFPGISAYTAMI, and FLKASSIVGALSIGLSIPGLW.

It belongs to the ThrE exporter (TC 2.A.79) family. As to quaternary structure, the transporter is composed of YjjB and YjjP.

It is found in the cell inner membrane. Involved in succinate export with YjjP. Both proteins are required for export. This chain is Probable succinate transporter subunit YjjB, found in Klebsiella pneumoniae subsp. pneumoniae (strain ATCC 700721 / MGH 78578).